The following is a 457-amino-acid chain: Proton extrusion protein PxcA (457 aa).

The next 4 membrane-spanning stretches (helical) occupy residues 239 to 259 (FILL…TFFL), 332 to 352 (INAI…GVVI), 368 to 390 (GILY…DMFV), and 417 to 437 (FNFL…KYWI).

This sequence belongs to the CemA family.

The protein resides in the cell inner membrane. Functionally, required for H(+) efflux immediately after light irradiation to form a rapid H(+) concentration gradient across the thylakoid membranes. Together with PxcL, contributes to transient H(+) uptake following dark to light transition. This chain is Proton extrusion protein PxcA, found in Gloeothece citriformis (strain PCC 7424) (Cyanothece sp. (strain PCC 7424)).